The following is a 239-amino-acid chain: UPF0173 metal-dependent hydrolase Dvul_0081 (239 aa).

The protein belongs to the UPF0173 family.

The protein is UPF0173 metal-dependent hydrolase Dvul_0081 of Nitratidesulfovibrio vulgaris (strain DP4) (Desulfovibrio vulgaris).